The sequence spans 152 residues: Protein-export protein SecB (152 aa).

Belongs to the SecB family. Homotetramer, a dimer of dimers. One homotetramer interacts with 1 SecA dimer.

It is found in the cytoplasm. Functionally, one of the proteins required for the normal export of preproteins out of the cell cytoplasm. It is a molecular chaperone that binds to a subset of precursor proteins, maintaining them in a translocation-competent state. It also specifically binds to its receptor SecA. In Rickettsia africae (strain ESF-5), this protein is Protein-export protein SecB.